Reading from the N-terminus, the 149-residue chain is D-aminoacyl-tRNA deacylase (149 aa).

The short motif at 137-138 (GP) is the Gly-cisPro motif, important for rejection of L-amino acids element.

Belongs to the DTD family. Homodimer.

Its subcellular location is the cytoplasm. It catalyses the reaction glycyl-tRNA(Ala) + H2O = tRNA(Ala) + glycine + H(+). It carries out the reaction a D-aminoacyl-tRNA + H2O = a tRNA + a D-alpha-amino acid + H(+). Its function is as follows. An aminoacyl-tRNA editing enzyme that deacylates mischarged D-aminoacyl-tRNAs. Also deacylates mischarged glycyl-tRNA(Ala), protecting cells against glycine mischarging by AlaRS. Acts via tRNA-based rather than protein-based catalysis; rejects L-amino acids rather than detecting D-amino acids in the active site. By recycling D-aminoacyl-tRNA to D-amino acids and free tRNA molecules, this enzyme counteracts the toxicity associated with the formation of D-aminoacyl-tRNA entities in vivo and helps enforce protein L-homochirality. The chain is D-aminoacyl-tRNA deacylase from Clostridium botulinum (strain Kyoto / Type A2).